We begin with the raw amino-acid sequence, 1330 residues long: Kinectin (1330 aa).

At 1–6 (MEFYES) the chain is on the cytoplasmic side. The helical; Signal-anchor for type II membrane protein transmembrane segment at 7–29 (TYFIVLIPSVVITVIFLFFWLFM) threads the bilayer. The Lumenal portion of the chain corresponds to 30-1330 (KETLYDEVLA…KEKEHYQVLE (1301 aa)). Disordered regions lie at residues 49–81 (PTKT…ESVP) and 108–218 (SSSV…KQKA). Ser-75 and Ser-77 each carry phosphoserine. Basic residues predominate over residues 113-122 (ERKKKEKKHK). Basic and acidic residues predominate over residues 123 to 135 (PVLEEQVTKESDV). Position 153 is a phosphothreonine (Thr-153). Ser-156 carries the phosphoserine modification. Positions 161–171 (SKKKPGQKKSK) are enriched in basic residues. N-linked (GlcNAc...) asparagine glycosylation is found at Asn-172, Asn-435, Asn-772, Asn-904, and Asn-1055. Residues 172 to 182 (NGSDDQDKKVE) are compositionally biased toward basic and acidic residues. Residues 332-1329 (HQLQEKDKLL…TKEKEHYQVL (998 aa)) adopt a coiled-coil conformation. Ser-1085 bears the Phosphoserine mark. The N-linked (GlcNAc...) asparagine glycan is linked to Asn-1236. Ser-1286 bears the Phosphoserine mark. N-linked (GlcNAc...) asparagine glycosylation is present at Asn-1302.

The protein belongs to the kinectin family. Parallel homodimers formed between the membrane-bound and the cytosolic form, and also between 2 cytosolic forms. Expressed in male brain, heart, kidney, liver, lung, spleen and testis.

It localises to the endoplasmic reticulum membrane. Receptor for kinesin thus involved in kinesin-driven vesicle motility. The protein is Kinectin (KTN1) of Vulpes vulpes (Red fox).